A 246-amino-acid chain; its full sequence is Sensory transduction protein LytT (246 aa).

One can recognise a Response regulatory domain in the interval 4-120 (HIMIAEDERL…RFKIAMNRIR (117 aa)). Position 55 is a 4-aspartylphosphate (aspartate 55). Positions 136–243 (LVVNLDEKMM…AKGLFDALQG (108 aa)) constitute an HTH LytTR-type domain.

Post-translationally, phosphorylated by LytS.

The protein localises to the cytoplasm. Its function is as follows. Member of the two-component regulatory system LytS/LytT that probably regulates genes involved in cell wall metabolism. The protein is Sensory transduction protein LytT (lytT) of Oceanobacillus iheyensis (strain DSM 14371 / CIP 107618 / JCM 11309 / KCTC 3954 / HTE831).